Here is a 175-residue protein sequence, read N- to C-terminus: MISIEKFEIFGREIWIAVFFEEKIDGVTFSLDGCEYLMERINSLKALLERRNVSVNLAEEKSDYPKIVYNVLVGDIENQDALRFLSFRGVTPFEKKVYEVLTKKVKRGSVITYGELAKMLSTSPRAVGNAMKRNPYPIIVPCHRVVLKSGLGDYTPKREYKQFLLEIEGVKGWTS.

Residue cysteine 142 is the Nucleophile; methyl group acceptor of the active site.

The protein belongs to the MGMT family.

It localises to the cytoplasm. It carries out the reaction a 6-O-methyl-2'-deoxyguanosine in DNA + L-cysteinyl-[protein] = S-methyl-L-cysteinyl-[protein] + a 2'-deoxyguanosine in DNA. The catalysed reaction is a 4-O-methyl-thymidine in DNA + L-cysteinyl-[protein] = a thymidine in DNA + S-methyl-L-cysteinyl-[protein]. Functionally, involved in the cellular defense against the biological effects of O6-methylguanine (O6-MeG) and O4-methylthymine (O4-MeT) in DNA. Repairs the methylated nucleobase in DNA by stoichiometrically transferring the methyl group to a cysteine residue in the enzyme. This is a suicide reaction: the enzyme is irreversibly inactivated. This chain is Methylated-DNA--protein-cysteine methyltransferase, found in Thermococcus barophilus (strain DSM 11836 / MP).